The chain runs to 205 residues: Heat shock protein beta-11 (205 aa).

Residues 67-180 enclose the sHSP domain; sequence VSPMTTFKPI…NERVIPITYT (114 aa). The tract at residues 184-205 is disordered; the sequence is KNPALQNSEPENQAVEAEAAEN. Positions 192–205 are enriched in low complexity; it reads EPENQAVEAEAAEN.

This sequence belongs to the small heat shock protein (HSP20) family. Expressed specifically in the rostral-most somites at 24 hpf. At 48 hpf, expression continues in the rostral-most somites and also in the notochord. Somite expression was restricted to the vicinity of the horizontal myoseptum. In adults, expressed in the heart.

The chain is Heat shock protein beta-11 (hspb11) from Danio rerio (Zebrafish).